Here is a 209-residue protein sequence, read N- to C-terminus: Glycerol-3-phosphate acyltransferase (209 aa).

5 consecutive transmembrane segments (helical) span residues 13 to 33 (ALIASLAIGYLLGSIPFGLLL), 63 to 83 (LAAATLLLDALKATAAALIAQ), 94 to 114 (PGLLGGFAAFIGHLFPVWLGF), 127 to 147 (LLGIFPLMVLVFAIVWLSIAF), and 151 to 171 (YSSLSALVATLVIPVALWILG).

It belongs to the PlsY family. Probably interacts with PlsX.

The protein localises to the cell inner membrane. It catalyses the reaction an acyl phosphate + sn-glycerol 3-phosphate = a 1-acyl-sn-glycero-3-phosphate + phosphate. Its pathway is lipid metabolism; phospholipid metabolism. Catalyzes the transfer of an acyl group from acyl-phosphate (acyl-PO(4)) to glycerol-3-phosphate (G3P) to form lysophosphatidic acid (LPA). This enzyme utilizes acyl-phosphate as fatty acyl donor, but not acyl-CoA or acyl-ACP. This Allorhizobium ampelinum (strain ATCC BAA-846 / DSM 112012 / S4) (Agrobacterium vitis (strain S4)) protein is Glycerol-3-phosphate acyltransferase.